Here is a 576-residue protein sequence, read N- to C-terminus: Rop guanine nucleotide exchange factor 13 (576 aa).

The PRONE domain occupies 119–485; the sequence is KSCYFAYVTE…QLTQNPELAM (367 aa). The segment covering 557 to 570 has biased composition (polar residues); the sequence is KTTYLESLGTTRSP. The disordered stretch occupies residues 557–576; the sequence is KTTYLESLGTTRSPTAGRYS.

As to quaternary structure, interacts with PRK6. In terms of tissue distribution, specifically expressed in mature flowers.

Functionally, guanine-nucleotide exchange factor (GEF) that acts as an activator of Rop (Rho of plants) GTPases by promoting the exchange of GDP for GTP. This chain is Rop guanine nucleotide exchange factor 13, found in Arabidopsis thaliana (Mouse-ear cress).